The following is a 949-amino-acid chain: Lon protease homolog, mitochondrial (949 aa).

The transit peptide at 1-65 (MAASTGYVRL…VLPGGVQWRG (65 aa)) directs the protein to the mitochondrion. Disordered regions lie at residues 68–94 (DSGN…TGEG) and 213–240 (EGLE…DELG). The 248-residue stretch at 112 to 359 (LPLIAITRNP…KALSLLKKEF (248 aa)) folds into the Lon N-terminal domain. Residues 223–232 (KSRRKLKRGK) are compositionally biased toward basic residues. Residue 512–519 (GPPGVGKT) coordinates ATP. In terms of domain architecture, Lon proteolytic spans 748–938 (VTPPGVVMGL…RDIFPIAFPR (191 aa)). Residues serine 844 and lysine 887 contribute to the active site.

The protein belongs to the peptidase S16 family. Homohexamer. Organized in a ring with a central cavity. The ATP-binding and proteolytic domains (AP-domain) form a hexameric chamber, while the N-terminal domain is arranged as a trimer of dimers. DNA and RNA binding is stimulated by substrate and inhibited by ATP binding. Interacts with TWNK and mitochondrial DNA polymerase subunit POLG. As to expression, detected in liver &gt; heart &gt; kidney &gt; testis.

The protein resides in the mitochondrion matrix. The catalysed reaction is Hydrolysis of proteins in presence of ATP.. ATP-dependent serine protease that mediates the selective degradation of misfolded, unassembled or oxidatively damaged polypeptides as well as certain short-lived regulatory proteins in the mitochondrial matrix. Endogenous substrates include mitochondrial steroidogenic acute regulatory (StAR) protein, DELE1, helicase Twinkle (TWNK) and the large ribosomal subunit protein MRPL32/bL32m. MRPL32/bL32m is protected from degradation by LONP1 when it is bound to a nucleic acid (RNA), but TWNK is not. May also have a chaperone function in the assembly of inner membrane protein complexes. Participates in the regulation of mitochondrial gene expression and in the maintenance of the integrity of the mitochondrial genome. Binds to mitochondrial promoters and RNA in a single-stranded, site-specific, and strand-specific manner. May regulate mitochondrial DNA replication and/or gene expression using site-specific, single-stranded DNA binding to target the degradation of regulatory proteins binding to adjacent sites in mitochondrial promoters. The chain is Lon protease homolog, mitochondrial (Lonp1) from Mus musculus (Mouse).